A 198-amino-acid polypeptide reads, in one-letter code: Sortase D (198 aa).

A helical membrane pass occupies residues 7–25 (LFIIAAGLVIAGYGGFKLI). Residues 36-46 (KEAKLAAKKPQ) are compositionally biased toward basic and acidic residues. The tract at residues 36–67 (KEAKLAAKKPQEASGTKNSTDQAKNKASFKPE) is disordered. The span at 48–57 (ASGTKNSTDQ) shows a compositional bias: polar residues. His119 serves as the catalytic Proton donor/acceptor. Catalysis depends on Cys177, which acts as the Acyl-thioester intermediate.

The protein belongs to the bacterial sortase family. Class D subfamily.

It localises to the cell membrane. Functionally, transpeptidase that anchors surface proteins to the cell wall. Recognizes and modifies its substrate by proteolytic cleavage of a C-terminal sorting signal. Following cleavage, a covalent intermediate is formed via a thioester bond between the sortase and its substrate, which is then transferred and covalently attached to the cell wall. This sortase recognizes a Leu-Pro-Asp-Thr-Ser/Ala (LPDTS/A) motif. It has two substrates, YhcR and YfkN. This chain is Sortase D, found in Bacillus subtilis (strain 168).